The chain runs to 183 residues: Large ribosomal subunit protein mL43 (183 aa).

Disordered regions lie at residues 120-144 (HTDNPSIQGQWTPSPTNGLPSTGCG) and 162-183 (PGALDRERDRIGSSFGFQAQAE). Over residues 122 to 139 (DNPSIQGQWTPSPTNGLP) the composition is skewed to polar residues. The segment covering 162–172 (PGALDRERDRI) has biased composition (basic and acidic residues).

It belongs to the mitochondrion-specific ribosomal protein mL43 family. In terms of assembly, component of the mitochondrial ribosome large subunit (39S) which comprises a 16S rRNA and about 50 distinct proteins. As to expression, ubiquitous with the highest levels in the liver, heart and kidneys. The skeletal muscle, brain and testis showed lower but detectable expression. Expression is coregulated with TWNK.

The protein resides in the mitochondrion. This is Large ribosomal subunit protein mL43 (Mrpl43) from Mus musculus (Mouse).